Consider the following 180-residue polypeptide: Large ribosomal subunit protein uL5 (180 aa).

This sequence belongs to the universal ribosomal protein uL5 family. As to quaternary structure, part of the 50S ribosomal subunit; part of the 5S rRNA/L5/L18/L25 subcomplex. Contacts the 5S rRNA and the P site tRNA. Forms a bridge to the 30S subunit in the 70S ribosome.

In terms of biological role, this is one of the proteins that bind and probably mediate the attachment of the 5S RNA into the large ribosomal subunit, where it forms part of the central protuberance. In the 70S ribosome it contacts protein S13 of the 30S subunit (bridge B1b), connecting the 2 subunits; this bridge is implicated in subunit movement. Contacts the P site tRNA; the 5S rRNA and some of its associated proteins might help stabilize positioning of ribosome-bound tRNAs. The polypeptide is Large ribosomal subunit protein uL5 (Chlamydia trachomatis serovar L2 (strain ATCC VR-902B / DSM 19102 / 434/Bu)).